The primary structure comprises 593 residues: Mitoguardin 2 (593 aa).

2 helical membrane passes run 11–31 and 42–62; these read MIQA…TTFG and PGLR…ALAA. Disordered regions lie at residues 101–134 and 195–228; these read KKGY…HSGS and LSVG…EPES. Residues 107–123 show a composition bias toward polar residues; the sequence is RRVQSPSSKSNDTLSGI. Over residues 124–134 the composition is skewed to low complexity; the sequence is SSIEPSKHSGS. Ser-132 carries the post-translational modification Phosphoserine. Thr-206 carries the post-translational modification Phosphothreonine. 3 positions are modified to phosphoserine: Ser-220, Ser-224, and Ser-228. Residue Thr-273 is modified to Phosphothreonine. Residues Ser-276 and Ser-295 each carry the phosphoserine modification. An FFAT motif is present at residues 292 to 298; the sequence is SFFSATE. A helical transmembrane segment spans residues 563–583; sequence ILLGYLGVPAASSIGLNGVLP.

The protein belongs to the mitoguardin family. In terms of assembly, homodimer and heterodimer; forms heterodimers with MIGA1. Interacts with PLD6/MitoPLD. Interacts (via phosphorylated FFAT motif) with MOSPD2. Phosphorylation at Ser-295 of the FFAT motif activates interaction with MOSPD2.

The protein resides in the mitochondrion outer membrane. Its function is as follows. Regulator of mitochondrial fusion: acts by forming homo- and heterodimers at the mitochondrial outer membrane and facilitating the formation of PLD6/MitoPLD dimers. May act by regulating phospholipid metabolism via PLD6/MitoPLD. The polypeptide is Mitoguardin 2 (Bos taurus (Bovine)).